The primary structure comprises 211 residues: Protein-methionine-sulfoxide reductase heme-binding subunit MsrQ (211 aa).

4 helical membrane-spanning segments follow: residues 17-37 (LAGL…GLGA), 82-102 (LWCF…ELGV), 116-136 (PYLT…FTST), and 153-173 (FVYL…KIIS).

The protein belongs to the MsrQ family. Heterodimer of a catalytic subunit (MsrP) and a heme-binding subunit (MsrQ). FMN is required as a cofactor. Requires heme b as cofactor.

The protein localises to the cell inner membrane. Its function is as follows. Part of the MsrPQ system that repairs oxidized periplasmic proteins containing methionine sulfoxide residues (Met-O), using respiratory chain electrons. Thus protects these proteins from oxidative-stress damage caused by reactive species of oxygen and chlorine generated by the host defense mechanisms. MsrPQ is essential for the maintenance of envelope integrity under bleach stress, rescuing a wide series of structurally unrelated periplasmic proteins from methionine oxidation, including the primary periplasmic chaperone SurA and the lipoprotein Pal. MsrQ provides electrons for reduction to the reductase catalytic subunit MsrP, using the quinone pool of the respiratory chain. The polypeptide is Protein-methionine-sulfoxide reductase heme-binding subunit MsrQ (Shigella sonnei (strain Ss046)).